Reading from the N-terminus, the 291-residue chain is Undecaprenyl-diphosphatase (291 aa).

8 consecutive transmembrane segments (helical) span residues 1-21, 48-68, 102-122, 126-146, 162-182, 203-223, 231-251, and 267-287; these read MFII…LTEF, SAFT…AWVF, LHVL…DDFI, LFSV…MIIA, ISYF…WPGF, SDFT…LSLL, IADI…GLIA, and FAIY…GFGI.

It belongs to the UppP family.

Its subcellular location is the cell membrane. The enzyme catalyses di-trans,octa-cis-undecaprenyl diphosphate + H2O = di-trans,octa-cis-undecaprenyl phosphate + phosphate + H(+). Functionally, catalyzes the dephosphorylation of undecaprenyl diphosphate (UPP). Confers resistance to bacitracin. In Staphylococcus aureus (strain COL), this protein is Undecaprenyl-diphosphatase.